Reading from the N-terminus, the 289-residue chain is Heme oxygenase 1 (289 aa).

Residues 1 to 12 (MERPQPDSSMPQ) show a composition bias toward polar residues. Residues 1–24 (MERPQPDSSMPQDLSEALKEATKE) are disordered. The Cytoplasmic segment spans residues 1–266 (MERPQPDSSM…KPQPSVLSQA (266 aa)). The heme b site is built by lysine 19, histidine 26, tyrosine 135, and arginine 184. The interval 239–261 (RRAGSKVQDLAPTKASRGKPQPS) is disordered. Serine 243 carries the post-translational modification Phosphoserine. The helical; Anchor for type IV membrane protein transmembrane segment at 267–289 (PLLRWVLTLSFLVATVAVGLYAM) threads the bilayer.

It belongs to the heme oxygenase family. Homodimer and higher order homooligomer. Oligomerization is crucial for its stability and function in the endoplasmic reticulum. Interacts with FLVCR2; this interaction is potentiated in the presence of heme. Post-translationally, a soluble form arises by proteolytic removal of the membrane anchor.

The protein resides in the endoplasmic reticulum membrane. The catalysed reaction is heme b + 3 reduced [NADPH--hemoprotein reductase] + 3 O2 = biliverdin IXalpha + CO + Fe(2+) + 3 oxidized [NADPH--hemoprotein reductase] + 3 H2O + H(+). Its activity is regulated as follows. Inhibited by metalloporphyrins such as Sn-, Co-, Mn- and Zn-protoporphyrins. In terms of biological role, catalyzes the oxidative cleavage of heme at the alpha-methene bridge carbon, released as carbon monoxide (CO), to generate biliverdin IXalpha, while releasing the central heme iron chelate as ferrous iron. Affords protection against programmed cell death and this cytoprotective effect relies on its ability to catabolize free heme and prevent it from sensitizing cells to undergo apoptosis. Functionally, catalyzes the oxidative cleavage of heme at the alpha-methene bridge carbon, released as carbon monoxide (CO), to generate biliverdin IXalpha, while releasing the central heme iron chelate as ferrous iron. The protein is Heme oxygenase 1 (HMOX1) of Bos taurus (Bovine).